The primary structure comprises 358 residues: Vascular endothelial growth factor D (358 aa).

An N-terminal signal peptide occupies residues 1 to 21 (MYGEWGMGNILMMFHVYLVQG). Positions 22-93 (FRSEHGPVKD…SRSASHRSTR (72 aa)) are excised as a propeptide. Disulfide bonds link C116/C158, C147/C194, and C151/C196. 2 N-linked (GlcNAc...) asparagine glycosylation sites follow: N160 and N190. Positions 211–358 (SIQTPEEDEC…AQGLYSQENP (148 aa)) are excised as a propeptide. Residues 227–242 (CPIDMLWDNTKCKCVL) form a 1; approximate repeat. The interval 227-323 (CPIDMLWDNT…PDTCSCEDRC (97 aa)) is 4 X 16 AA repeats of C-X(10)-C-X-C-X(1,3)-C. 3 consecutive repeat copies span residues 263-278 (CGPHMTFDEDRCECVC), 282-298 (CPGDLIQHPENCSCFEC), and 306-323 (CQKHKIFHPDTCSCEDRC). The N-linked (GlcNAc...) asparagine glycan is linked to N292.

The protein belongs to the PDGF/VEGF growth factor family. In terms of assembly, homodimer; non-covalent and antiparallel. Undergoes a complex proteolytic maturation which generates a variety of processed secreted forms with increased activity toward VEGFR-3 and VEGFR-2. VEGF-D first form an antiparallel homodimer linked by disulfide bonds before secretion. The fully processed VEGF-D is composed mostly of two VEGF homology domains (VHDs) bound by non-covalent interactions. In terms of tissue distribution, highly expressed in fetal and adult lung.

The protein resides in the secreted. Growth factor active in angiogenesis, lymphangiogenesis and endothelial cell growth, stimulating their proliferation and migration and also has effects on the permeability of blood vessels. May function in the formation of the venous and lymphatic vascular systems during embryogenesis, and also in the maintenance of differentiated lymphatic endothelium in adults. Binds and activates VEGFR-3 (Flt4) receptor. In Mus musculus (Mouse), this protein is Vascular endothelial growth factor D.